The following is a 266-amino-acid chain: 5'-nucleotidase SurE (266 aa).

Residues aspartate 10, aspartate 11, serine 41, and asparagine 97 each contribute to the a divalent metal cation site.

It belongs to the SurE nucleotidase family. A divalent metal cation is required as a cofactor.

The protein localises to the cytoplasm. The enzyme catalyses a ribonucleoside 5'-phosphate + H2O = a ribonucleoside + phosphate. Nucleotidase that shows phosphatase activity on nucleoside 5'-monophosphates. The polypeptide is 5'-nucleotidase SurE (Methanocella arvoryzae (strain DSM 22066 / NBRC 105507 / MRE50)).